Here is a 154-residue protein sequence, read N- to C-terminus: 6,7-dimethyl-8-ribityllumazine synthase (154 aa).

5-amino-6-(D-ribitylamino)uracil is bound by residues F22, 56-58 (AFE), and 80-82 (AVI). Residue 85-86 (ST) participates in (2S)-2-hydroxy-3-oxobutyl phosphate binding. H88 serves as the catalytic Proton donor. Residue F113 coordinates 5-amino-6-(D-ribitylamino)uracil. R127 contacts (2S)-2-hydroxy-3-oxobutyl phosphate.

Belongs to the DMRL synthase family.

It carries out the reaction (2S)-2-hydroxy-3-oxobutyl phosphate + 5-amino-6-(D-ribitylamino)uracil = 6,7-dimethyl-8-(1-D-ribityl)lumazine + phosphate + 2 H2O + H(+). Its pathway is cofactor biosynthesis; riboflavin biosynthesis; riboflavin from 2-hydroxy-3-oxobutyl phosphate and 5-amino-6-(D-ribitylamino)uracil: step 1/2. Functionally, catalyzes the formation of 6,7-dimethyl-8-ribityllumazine by condensation of 5-amino-6-(D-ribitylamino)uracil with 3,4-dihydroxy-2-butanone 4-phosphate. This is the penultimate step in the biosynthesis of riboflavin. This Clostridium beijerinckii (strain ATCC 51743 / NCIMB 8052) (Clostridium acetobutylicum) protein is 6,7-dimethyl-8-ribityllumazine synthase.